Here is a 384-residue protein sequence, read N- to C-terminus: Ribonucleoside-diphosphate reductase small chain (384 aa).

Positions 130, 161, and 164 each coordinate Fe cation. Y168 is an active-site residue. 3 residues coordinate Fe cation: E224, E258, and H261.

It belongs to the ribonucleoside diphosphate reductase small chain family. In terms of assembly, heterodimer of a large and a small subunit. The cofactor is Fe cation.

It catalyses the reaction a 2'-deoxyribonucleoside 5'-diphosphate + [thioredoxin]-disulfide + H2O = a ribonucleoside 5'-diphosphate + [thioredoxin]-dithiol. Provides the precursors necessary for DNA synthesis. Catalyzes the biosynthesis of deoxyribonucleotides from the corresponding ribonucleotides. This is Ribonucleoside-diphosphate reductase small chain from Spisula solidissima (Atlantic surf-clam).